The primary structure comprises 1118 residues: uncharacterized protein (1118 aa).

Disordered stretches follow at residues 1–69, 1044–1071, and 1090–1118; these read MESG…NGED, PKSV…EKID, and IRPT…SFEL. A compositionally biased stretch (acidic residues) spans 13–34; sequence DMVEEDNDEDSFEEPACEDSFD. Residues 35–60 show a composition bias toward polar residues; the sequence is SQEASSKANEPQNDSFDEPIQSSVSK. A compositionally biased stretch (acidic residues) spans 1107-1118; it reads EDSDDLEDSFEL.

This is an uncharacterized protein from Caenorhabditis elegans.